Consider the following 138-residue polypeptide: ATP synthase epsilon chain (138 aa).

Belongs to the ATPase epsilon chain family. F-type ATPases have 2 components, CF(1) - the catalytic core - and CF(0) - the membrane proton channel. CF(1) has five subunits: alpha(3), beta(3), gamma(1), delta(1), epsilon(1). CF(0) has three main subunits: a, b and c.

The protein localises to the cell membrane. Its function is as follows. Produces ATP from ADP in the presence of a proton gradient across the membrane. The polypeptide is ATP synthase epsilon chain (atpC) (Streptococcus mutans serotype c (strain ATCC 700610 / UA159)).